We begin with the raw amino-acid sequence, 149 residues long: MADQLTEEQIAEFKEAFSLFDKDGDGTITTKELGTVMRSLGQNPTEAELQDMINEVDADGNGTIDFPEFLTMMARKMKDTDSEEEIREAFRVFDKDGNGFISAAELRHVMTNLGEKLTDEEVDEMIREADIDGDGQVNYEEFVTMMTTK.

A2 bears the N-acetylalanine mark. EF-hand domains follow at residues 8–43, 44–79, 81–116, and 117–149; these read EQIA…LGQN, PTEA…KMKD, DSEE…LGEK, and LTDE…MTTK. Positions 21, 23, 25, 27, 32, 57, 59, 61, 63, 68, 94, 96, 98, and 105 each coordinate Ca(2+). K116 bears the N6,N6,N6-trimethyllysine mark. Ca(2+) contacts are provided by D130, D132, D134, Q136, and E141.

The protein belongs to the calmodulin family. Interacts (in the presence of Ca(2+)) with pde-1, madf-3, rpl-7A, tax-6, efk-1, npp-1, obr-4, sos-1, akt-1, unc-13, tag-196, ugt-48, nmy-2, F27D4.4, ddx-23, efa-6 and R11H6.4.

Its function is as follows. Calmodulin mediates the control of a large number of enzymes, ion channels and other proteins by Ca(2+). Among the enzymes to be stimulated by the calmodulin-Ca(2+) complex are a number of protein kinases and phosphatases. This Caenorhabditis elegans protein is Calmodulin (cmd-1).